We begin with the raw amino-acid sequence, 194 residues long: Imidazoleglycerol-phosphate dehydratase (194 aa).

It belongs to the imidazoleglycerol-phosphate dehydratase family.

It localises to the cytoplasm. The enzyme catalyses D-erythro-1-(imidazol-4-yl)glycerol 3-phosphate = 3-(imidazol-4-yl)-2-oxopropyl phosphate + H2O. The protein operates within amino-acid biosynthesis; L-histidine biosynthesis; L-histidine from 5-phospho-alpha-D-ribose 1-diphosphate: step 6/9. The sequence is that of Imidazoleglycerol-phosphate dehydratase from Bacillus cereus (strain AH187).